Here is a 376-residue protein sequence, read N- to C-terminus: Glutamate 5-kinase (376 aa).

Lys23 contacts ATP. Substrate-binding residues include Ser63, Asp150, and Asn162. Residues 182-183 (SD) and 222-228 (TGGMASK) contribute to the ATP site. One can recognise a PUA domain in the interval 284 to 358 (GGALRIDAGA…GKQTAQLPEG (75 aa)).

This sequence belongs to the glutamate 5-kinase family.

The protein resides in the cytoplasm. It catalyses the reaction L-glutamate + ATP = L-glutamyl 5-phosphate + ADP. It functions in the pathway amino-acid biosynthesis; L-proline biosynthesis; L-glutamate 5-semialdehyde from L-glutamate: step 1/2. Catalyzes the transfer of a phosphate group to glutamate to form L-glutamate 5-phosphate. In Corynebacterium diphtheriae (strain ATCC 700971 / NCTC 13129 / Biotype gravis), this protein is Glutamate 5-kinase.